A 188-amino-acid polypeptide reads, in one-letter code: uncharacterized protein (188 aa).

Positions 1–18 are cleaved as a signal peptide; it reads MTLRIIAHLLALTASLAG. A lipid anchor (N-palmitoyl cysteine) is attached at cysteine 19. A lipid anchor (S-diacylglycerol cysteine) is attached at cysteine 19.

The protein resides in the cell membrane. This is an uncharacterized protein from Sinorhizobium fredii (strain NBRC 101917 / NGR234).